The following is a 713-amino-acid chain: Cyclomaltodextrin glucanotransferase (713 aa).

The N-terminal stretch at 1–27 (MKKISKLTTALALSLSLALSLLGPAHA) is a signal peptide. The tract at residues 28–165 (APDTSVSNKQ…NIKVIIDFAP (138 aa)) is A1. Positions 54, 56, 59, and 60 each coordinate Ca(2+). Cysteine 70 and cysteine 77 are disulfide-bonded. Positions 78 and 80 each coordinate Ca(2+). Position 127–128 (127–128 (YW)) interacts with substrate. Asparagine 166 lines the Ca(2+) pocket. The b stretch occupies residues 166–229 (NHTSPASLDQ…NLYDLADLNH (64 aa)). A substrate-binding site is contributed by histidine 167. Residue isoleucine 217 participates in Ca(2+) binding. 220-223 (NLYD) is a substrate binding site. Residue aspartate 226 participates in Ca(2+) binding. An A2 region spans residues 230–433 (NNSTVDTYLK…LRKSNPAIAY (204 aa)). A substrate-binding site is contributed by arginine 254. Residue aspartate 256 is the Nucleophile of the active site. 259 to 260 (KH) is a binding site for substrate. Histidine 260 lines the Ca(2+) pocket. Glutamate 284 serves as the catalytic Proton donor. Substrate contacts are provided by histidine 354, aspartate 398, and arginine 402. Residues 434 to 522 (GTTQERWINN…GTAVWQYTTA (89 aa)) are c. Positions 523–609 (VTAPTIGHVG…SNVHDNFEVL (87 aa)) are d. The region spanning 526–607 (PTIGHVGPMM…TSSNVHDNFE (82 aa)) is the IPT/TIG domain. The 106-residue stretch at 608–713 (VLSGDQVSVR…TATINVNWQP (106 aa)) folds into the CBM20 domain. Positions 610-713 (SGDQVSVRFV…TATINVNWQP (104 aa)) are e.

It belongs to the glycosyl hydrolase 13 family. As to quaternary structure, monomer. The cofactor is Ca(2+).

It localises to the secreted. The catalysed reaction is Cyclizes part of a (1-&gt;4)-alpha-D-glucan chain by formation of a (1-&gt;4)-alpha-D-glucosidic bond.. This Bacillus sp. (strain 17-1) protein is Cyclomaltodextrin glucanotransferase (cgt).